A 127-amino-acid chain; its full sequence is uncharacterized protein (127 aa).

The span at 1–13 (MEAGNRSGTPQHR) shows a compositional bias: polar residues. A disordered region spans residues 1–26 (MEAGNRSGTPQHRQLSEIRQDLSSSP).

This is an uncharacterized protein from Saccharomyces cerevisiae (strain ATCC 204508 / S288c) (Baker's yeast).